Reading from the N-terminus, the 138-residue chain is FUN14 domain-containing protein fndc-1 (138 aa).

2 consecutive transmembrane segments (helical) span residues 37–56 (PMVQ…YFVT) and 61–78 (LVAA…FAIH). 2 N-linked (GlcNAc...) asparagine glycosylation sites follow: asparagine 85 and asparagine 111.

It belongs to the FUN14 family. In terms of tissue distribution, broadly expressed in somatic tissues. Expressed in the hermaphrodite spermatheca and male gonad. Expressed in spermatids, but not expressed in oocytes.

The protein resides in the mitochondrion outer membrane. Its function is as follows. Mitophagy receptor which plays a role in paternal mitochondria degradation in embryos after the two-cell stage. The protein is FUN14 domain-containing protein fndc-1 of Caenorhabditis elegans.